Reading from the N-terminus, the 225-residue chain is Endonuclease V (225 aa).

Mg(2+) is bound by residues Asp-43 and Asp-110.

The protein belongs to the endonuclease V family. Mg(2+) serves as cofactor.

The protein localises to the cytoplasm. The catalysed reaction is Endonucleolytic cleavage at apurinic or apyrimidinic sites to products with a 5'-phosphate.. DNA repair enzyme involved in the repair of deaminated bases. Selectively cleaves double-stranded DNA at the second phosphodiester bond 3' to a deoxyinosine leaving behind the intact lesion on the nicked DNA. The chain is Endonuclease V from Thermotoga petrophila (strain ATCC BAA-488 / DSM 13995 / JCM 10881 / RKU-1).